Reading from the N-terminus, the 217-residue chain is Small ribosomal subunit protein uS3c (217 aa).

The 71-residue stretch at 39–109 (IRNFLRTKLI…RFRITITYIP (71 aa)) folds into the KH type-2 domain.

It belongs to the universal ribosomal protein uS3 family. Part of the 30S ribosomal subunit.

Its subcellular location is the plastid. It localises to the chloroplast. This Chlorokybus atmophyticus (Soil alga) protein is Small ribosomal subunit protein uS3c (rps3).